Reading from the N-terminus, the 217-residue chain is NADPH-dependent 3-demethoxyubiquinone 3-hydroxylase, mitochondrial (217 aa).

The transit peptide at 1–23 (MSAAGAIAAASVGRLRTGVRRPF) directs the protein to the mitochondrion. Tandem repeats lie at residues 48–129 (AVDR…TALL) and 130–217 (GKEG…SERF). Residues 48-217 (AVDRIIRVDH…SAAIYLSERF (170 aa)) form a 2 X approximate tandem repeats region. Arg-51 serves as a coordination point for NADH. The Fe cation site is built by Glu-60, Glu-90, His-93, Glu-142, Glu-178, and His-181. The NADH site is built by Tyr-212 and Arg-216.

It belongs to the COQ7 family. In terms of assembly, component of a multi-subunit COQ enzyme complex. Interacts with COQ8B and COQ6. Interacts with COQ9. Fe cation is required as a cofactor. In terms of tissue distribution, highly expressed in tissues with high energy demand such as heart, muscle, liver, and kidney.

The protein resides in the mitochondrion inner membrane. The catalysed reaction is a 5-methoxy-2-methyl-3-(all-trans-polyprenyl)benzoquinone + NADH + O2 = a 3-demethylubiquinone + NAD(+) + H2O. It participates in cofactor biosynthesis; ubiquinone biosynthesis. Catalyzes the hydroxylation of the 5-methoxy-2-methyl-3-(all-trans-polyprenyl)benzoquinone at the C6 position and participates in the biosynthesis of ubiquinone. Catalyzes the reaction through a substrate-mediated reduction pathway, whereby NADH shuttles electrons to 5-methoxy-2-methyl-3-(all-trans-decaprenyl)benzoquinone, which then transfers the electrons to the two Fe(3+) centers. The binding of 5-methoxy-2-methyl-3-(all-trans-polyprenyl)benzoquinone (DMQn) mediates reduction of the diiron center by nicotinamide adenine dinucleotide (NADH) and initiates oxygen activation for subsequent DMQ hydroxylation. The physiological substrates are 5-methoxy-2-methyl-3-(all-trans-nonaprenyl)benzoquinone (DMQ(9)) and 5-methoxy-2-methyl-3-(all-trans-decaprenyl)benzoquinone (DMQ(10)), however in vitro the enzyme does not have any specificity concerning the length of the polyprenyl tail, and accepts tails of various lengths with similar efficiency. Also has a structural role in the COQ enzyme complex, stabilizing other COQ polypeptides. Involved in lifespan determination in a ubiquinone-independent manner. Plays a role in modulating mitochondrial stress responses, acting in the nucleus, perhaps via regulating gene expression, independent of its characterized mitochondrial function in ubiquinone biosynthesis. The polypeptide is NADPH-dependent 3-demethoxyubiquinone 3-hydroxylase, mitochondrial (Mus musculus (Mouse)).